Consider the following 225-residue polypeptide: Protein-L-isoaspartate O-methyltransferase (225 aa).

S75 is a catalytic residue.

It belongs to the methyltransferase superfamily. L-isoaspartyl/D-aspartyl protein methyltransferase family.

It is found in the cytoplasm. The catalysed reaction is [protein]-L-isoaspartate + S-adenosyl-L-methionine = [protein]-L-isoaspartate alpha-methyl ester + S-adenosyl-L-homocysteine. In terms of biological role, catalyzes the methyl esterification of L-isoaspartyl residues in peptides and proteins that result from spontaneous decomposition of normal L-aspartyl and L-asparaginyl residues. It plays a role in the repair and/or degradation of damaged proteins. The sequence is that of Protein-L-isoaspartate O-methyltransferase from Xanthomonas campestris pv. campestris (strain 8004).